A 257-amino-acid polypeptide reads, in one-letter code: tRNA uridine(34) hydroxylase (257 aa).

The 95-residue stretch at 128–222 (NGRRLVMLDA…YFEQVGGEGY (95 aa)) folds into the Rhodanese domain. Cysteine 182 functions as the Cysteine persulfide intermediate in the catalytic mechanism.

It belongs to the TrhO family.

It catalyses the reaction uridine(34) in tRNA + AH2 + O2 = 5-hydroxyuridine(34) in tRNA + A + H2O. Its function is as follows. Catalyzes oxygen-dependent 5-hydroxyuridine (ho5U) modification at position 34 in tRNAs. The chain is tRNA uridine(34) hydroxylase from Xylella fastidiosa (strain 9a5c).